Here is a 207-residue protein sequence, read N- to C-terminus: Urease accessory protein UreG (207 aa).

14 to 21 is a binding site for GTP; sequence GPVGSGKT.

This sequence belongs to the SIMIBI class G3E GTPase family. UreG subfamily. Homodimer. UreD, UreF and UreG form a complex that acts as a GTP-hydrolysis-dependent molecular chaperone, activating the urease apoprotein by helping to assemble the nickel containing metallocenter of UreC. The UreE protein probably delivers the nickel.

It is found in the cytoplasm. Facilitates the functional incorporation of the urease nickel metallocenter. This process requires GTP hydrolysis, probably effectuated by UreG. The chain is Urease accessory protein UreG from Tolumonas auensis (strain DSM 9187 / NBRC 110442 / TA 4).